The chain runs to 328 residues: RNA-binding protein KhpB (328 aa).

Residues 3–53 are jag_N domain; that stretch reads VFTGSTVEEAIQKGLKELDIPRMKAHIKVISREKKGFLGLFGKKPAQVDIE. Residues 54-180 are linker; that stretch reads AISETTVVKA…GLKVETNFDI (127 aa). Position 89 is a phosphothreonine (T89). The KH domain occupies 181-258; the sequence is EQVATEVMAY…SRTFYVTINV (78 aa). The region spanning 263-328 is the R3H domain; it reads EHRAEVLQTY…PNRYVVVDTE (66 aa).

Belongs to the KhpB RNA-binding protein family. Interacts with KhpA; the 2 proteins colocalize throughout the cell cycle, with some increase at midcell in dividing cells. Interacts with StkP which phosphorylates it, interacts with MltG, MreC, RodZ and YidC2. Phosphorylated on Thr-89 by StkP; there is another poorly phosphorylated residue in the protein. Dephosphorylated by PhpP.

The protein localises to the cytoplasm. Functionally, a probable RNA chaperone. Forms a complex with KhpA which binds to cellular RNA and controls its expression. Plays a role in peptidoglycan (PG) homeostasis and cell length regulation. Forms a complex with KhpA which presumably binds to about 170 cellular RNAs (mRNA, tRNA intergenic RNA and sRNAs); the proteins alone each bind the same set of RNAs. Suppresses the requirement for PBP2b (penA, a transpeptidase) in peripheral peptidoglycan (PG) synthesis. May function as a pleiotropic RNA chaperone controlling pneumococcal cell division, including PG homeostasis and regulating peripheral PG synthesis by the elongasome. This Streptococcus pneumoniae serotype 2 (strain D39 / NCTC 7466) protein is RNA-binding protein KhpB.